The chain runs to 264 residues: Undecaprenyl-diphosphatase (264 aa).

8 consecutive transmembrane segments (helical) span residues 1–21, 39–59, 83–103, 113–133, 143–163, 181–201, 220–240, and 244–264; these read MDIV…FLPI, QGLA…VFYF, STLV…GLAF, SGIV…LADK, VTIK…IPGV, VGSA…AGGL, LAAL…MSII, and SMTP…FIFV.

This sequence belongs to the UppP family.

The protein resides in the cell inner membrane. The catalysed reaction is di-trans,octa-cis-undecaprenyl diphosphate + H2O = di-trans,octa-cis-undecaprenyl phosphate + phosphate + H(+). Functionally, catalyzes the dephosphorylation of undecaprenyl diphosphate (UPP). Confers resistance to bacitracin. This chain is Undecaprenyl-diphosphatase, found in Campylobacter curvus (strain 525.92).